A 490-amino-acid chain; its full sequence is 4-hydroxyphenylacetaldehyde synthase (490 aa).

L-phenylalanine contacts are provided by Pro97, His198, and His313. The residue at position 314 (Lys314) is an N6-(pyridoxal phosphate)lysine. Phe343 is an L-phenylalanine binding site.

It belongs to the group II decarboxylase family. Homodimer. The cofactor is pyridoxal 5'-phosphate.

The enzyme catalyses L-tyrosine + O2 + H2O + H(+) = (4-hydroxyphenyl)acetaldehyde + H2O2 + NH4(+) + CO2. Functionally, catalyzes the production of 4-hydroxyphenylacetaldehyde (HPAA) directly from L-tyrosine, tyramine not being formed as an intermediate. This Rhodiola rosea (Roseroot) protein is 4-hydroxyphenylacetaldehyde synthase.